The chain runs to 156 residues: Nuclear cap-binding protein subunit 2 (156 aa).

Position 2 is an N-acetylserine (serine 2). 2 positions are modified to phosphoserine: serine 13 and serine 18. Residues tyrosine 20, tyrosine 43, arginine 112–aspartate 116, arginine 123–arginine 127, and glutamine 133–valine 134 contribute to the mRNA site. In terms of domain architecture, RRM spans cysteine 40–glycine 118. The disordered stretch occupies residues glutamine 124 to glutamine 156. Positions valine 134–alanine 144 are enriched in basic and acidic residues. Arginine 146 carries the post-translational modification Omega-N-methylarginine.

This sequence belongs to the RRM NCBP2 family. In terms of assembly, component of the nuclear cap-binding complex (CBC), a heterodimer composed of NCBP1/CBP80 and NCBP2/CBP20 that interacts with m7GpppG-capped RNA. Found in a U snRNA export complex with PHAX/RNUXA, NCBP1/CBP80, NCBP2/CBP20, RAN, XPO1 and m7G-capped RNA. Interacts with PHAX/RNUXA, EIF4G1, HNRNPF, HNRNPH1 and ALYREF/THOC4/ALY. Interacts with SRRT/ARS2 and KPNA3.

It is found in the nucleus. The protein resides in the cytoplasm. Its function is as follows. Component of the cap-binding complex (CBC), which binds co-transcriptionally to the 5' cap of pre-mRNAs and is involved in various processes such as pre-mRNA splicing, translation regulation, nonsense-mediated mRNA decay, RNA-mediated gene silencing (RNAi) by microRNAs (miRNAs) and mRNA export. The CBC complex is involved in mRNA export from the nucleus via its interaction with ALYREF/THOC4/ALY, leading to the recruitment of the mRNA export machinery to the 5' end of mRNA and to mRNA export in a 5' to 3' direction through the nuclear pore. The CBC complex is also involved in mediating U snRNA and intronless mRNAs export from the nucleus. The CBC complex is essential for a pioneer round of mRNA translation, before steady state translation when the CBC complex is replaced by cytoplasmic cap-binding protein eIF4E. The pioneer round of mRNA translation mediated by the CBC complex plays a central role in nonsense-mediated mRNA decay (NMD), NMD only taking place in mRNAs bound to the CBC complex, but not on eIF4E-bound mRNAs. The CBC complex enhances NMD in mRNAs containing at least one exon-junction complex (EJC) via its interaction with UPF1, promoting the interaction between UPF1 and UPF2. The CBC complex is also involved in 'failsafe' NMD, which is independent of the EJC complex, while it does not participate in Staufen-mediated mRNA decay (SMD). During cell proliferation, the CBC complex is also involved in microRNAs (miRNAs) biogenesis via its interaction with SRRT/ARS2, thereby being required for miRNA-mediated RNA interference. The CBC complex also acts as a negative regulator of PARN, thereby acting as an inhibitor of mRNA deadenylation. In the CBC complex, NCBP2/CBP20 recognizes and binds capped RNAs (m7GpppG-capped RNA) but requires NCBP1/CBP80 to stabilize the movement of its N-terminal loop and lock the CBC into a high affinity cap-binding state with the cap structure. The conventional cap-binding complex with NCBP2 binds both small nuclear RNA (snRNA) and messenger (mRNA) and is involved in their export from the nucleus. In Bos taurus (Bovine), this protein is Nuclear cap-binding protein subunit 2 (NCBP2).